A 985-amino-acid chain; its full sequence is Guanine nucleotide exchange protein smcr8b (985 aa).

Positions 47 to 225 (ISSAKLKKDF…VKCSSEREPI (179 aa)) constitute a uDENN FLCN/SMCR8-type domain. Residues 242-292 (NEKSSHTDEISPQEKDGCGNSRKVEVKLENENRSHFEHEQYGKQRKDKPDK) are compositionally biased toward basic and acidic residues. 3 disordered regions span residues 242-301 (NEKS…PLAN), 502-528 (QSQV…SPAE), and 639-659 (EESP…EDNN). Residues 390–895 (RLKTLEELCD…LINLLVEPKS (506 aa)) enclose the cDENN FLCN/SMCR8-type domain. Over residues 502-514 (QSQVQHSTLNTPS) the composition is skewed to polar residues. Residues 904–962 (FTFAQSVQSKLVTKAFLLTFSHGHPSPSRPQGSSGTECFLSELHTDDKKILRYLSELIK) enclose the dDENN FLCN/SMCR8-type domain.

It belongs to the SMCR8 family. Component of the C9orf72-SMCR8 complex. The C9orf72-SMCR8 complex associates with the ATG1/ULK1 kinase complex.

It localises to the cytoplasm. The protein localises to the nucleus. Functionally, component of the C9orf72-SMCR8 complex, a complex that has guanine nucleotide exchange factor (GEF) activity and regulates autophagy. In the complex, C9orf72 and SMCR8 probably constitute the catalytic subunits that promote the exchange of GDP to GTP, converting inactive GDP-bound RAB8A and RAB39B into their active GTP-bound form, thereby promoting autophagosome maturation. The C9orf72-SMCR8 complex also acts as a negative regulator of autophagy initiation by interacting with the ATG1/ULK1 kinase complex and inhibiting its protein kinase activity. This chain is Guanine nucleotide exchange protein smcr8b (smcr8b), found in Danio rerio (Zebrafish).